Reading from the N-terminus, the 264-residue chain is Matrilysin (264 aa).

The first 17 residues, 1-17 (MQLTLFCFVCLLPGHLA), serve as a signal peptide directing secretion. The propeptide at 18–94 (LPLSQEAGDV…PRCGVPDVAE (77 aa)) is activation peptide. Residues 85–92 (PRCGVPDV) carry the Cysteine switch motif. C87 serves as a coordination point for Zn(2+). D153 serves as a coordination point for Ca(2+). Zn(2+) contacts are provided by H163 and D165. Ca(2+) contacts are provided by D170, G171, G173, and T175. Residue H178 coordinates Zn(2+). Ca(2+) is bound by residues G185, G187, and D189. H191 is a Zn(2+) binding site. Ca(2+) is bound by residues D193 and E196. H214 is a binding site for Zn(2+). E215 is a catalytic residue. Positions 218 and 224 each coordinate Zn(2+).

It belongs to the peptidase M10A family. Requires Ca(2+) as cofactor. The cofactor is Zn(2+). Expressed in the intestinal epithelium (at protein level).

The protein localises to the secreted. The protein resides in the extracellular space. It localises to the extracellular matrix. The enzyme catalyses Cleavage of 14-Ala-|-Leu-15 and 16-Tyr-|-Leu-17 in B chain of insulin. No action on collagen types I, II, IV, V. Cleaves gelatin chain alpha2(I) &gt; alpha1(I).. In terms of biological role, degrades casein, gelatins of types I, III, IV, and V, and fibronectin. Activates procollagenase. May play a role in tissue reorganization. This Mus musculus (Mouse) protein is Matrilysin (Mmp7).